The following is a 711-amino-acid chain: Polyribonucleotide nucleotidyltransferase (711 aa).

Mg(2+) is bound by residues aspartate 486 and aspartate 492. Positions proline 553–isoleucine 612 constitute a KH domain. An S1 motif domain is found at glycine 622–lysine 690. A disordered region spans residues isoleucine 689 to glutamate 711. Over residues glutamate 694–glutamate 711 the composition is skewed to low complexity.

The protein belongs to the polyribonucleotide nucleotidyltransferase family. Component of the RNA degradosome, which is a multiprotein complex involved in RNA processing and mRNA degradation. Requires Mg(2+) as cofactor.

It localises to the cytoplasm. The catalysed reaction is RNA(n+1) + phosphate = RNA(n) + a ribonucleoside 5'-diphosphate. Functionally, involved in mRNA degradation. Catalyzes the phosphorolysis of single-stranded polyribonucleotides processively in the 3'- to 5'-direction. In Salmonella arizonae (strain ATCC BAA-731 / CDC346-86 / RSK2980), this protein is Polyribonucleotide nucleotidyltransferase.